The chain runs to 257 residues: Acetylglutamate kinase (257 aa).

Residues 43–44, Arg65, and Asn157 each bind substrate; that span reads GG. Residues 180 to 185 and 208 to 210 each bind ATP; these read DISSIL and IIT.

Belongs to the acetylglutamate kinase family. ArgB subfamily. Homodimer.

It localises to the cytoplasm. The catalysed reaction is N-acetyl-L-glutamate + ATP = N-acetyl-L-glutamyl 5-phosphate + ADP. It participates in amino-acid biosynthesis; L-arginine biosynthesis; N(2)-acetyl-L-ornithine from L-glutamate: step 2/4. In terms of biological role, catalyzes the ATP-dependent phosphorylation of N-acetyl-L-glutamate. The protein is Acetylglutamate kinase of Buchnera aphidicola subsp. Acyrthosiphon pisum (strain Tuc7).